A 91-amino-acid chain; its full sequence is DNA-directed RNA polymerase subunit omega (91 aa).

The protein belongs to the RNA polymerase subunit omega family. As to quaternary structure, the RNAP catalytic core consists of 2 alpha, 1 beta, 1 beta' and 1 omega subunit. When a sigma factor is associated with the core the holoenzyme is formed, which can initiate transcription.

It catalyses the reaction RNA(n) + a ribonucleoside 5'-triphosphate = RNA(n+1) + diphosphate. Promotes RNA polymerase assembly. Latches the N- and C-terminal regions of the beta' subunit thereby facilitating its interaction with the beta and alpha subunits. The chain is DNA-directed RNA polymerase subunit omega from Yersinia enterocolitica serotype O:8 / biotype 1B (strain NCTC 13174 / 8081).